The primary structure comprises 537 residues: MSFKCIFLTGGVVSSLGKGLTAASLALLLERQGLKVAMLKLDPYLNVDPGTMNPYEHGEVYVTNDGIETDLDLGHYHRFSSVNLSRYSTATSGQIYARVIKKERDGLYLGSTVQVIPHITNEIIEVILECARENHPDVLIVEIGGTVGDIESLPFLEAIRQFRYEHAEDCFSIHMTYVPYLQAAGEVKTKPTQHSVQSLRSIGIIPDAILCRSEAPLSSEVKKKISLFCNVPSTAVFNVVDVEHSIYEMPLMLSQEKISTFITEKLGLFTKKEDLSDWEMLVERLRHPLPNKIRLGLVGKYVQHKDAYKSVFESITHAALSLNCSVELFPLDSDDPHFLETLELCDGCLVPGGFGSRGWEGKIIAAKLCRERGIPYFGICLGMQVLVVEYARHVLHLEHANSTEMDKDTPDPVICMLDWQASLIATGGTMRLGAYPCALSPGSKVYAMYGQPEIMERHRHRYEVNFNYIQQLKDHGLDIVGTCPEQGLCEIVEIKDHPWMIGVQFHPEFLSKLIKPHPLFVGFIEAALLHSRNKTYV.

Positions 1–268 (MSFKCIFLTG…STFITEKLGL (268 aa)) are amidoligase domain. Ser14 contacts CTP. UTP is bound at residue Ser14. 15–20 (SLGKGL) serves as a coordination point for ATP. Residue Tyr55 participates in L-glutamine binding. Residue Asp72 participates in ATP binding. Residues Asp72 and Glu142 each contribute to the Mg(2+) site. CTP contacts are provided by residues 149 to 151 (DIE), 188 to 193 (KTKPTQ), and Lys224. UTP contacts are provided by residues 188-193 (KTKPTQ) and Lys224. In terms of domain architecture, Glutamine amidotransferase type-1 spans 294-533 (RLGLVGKYVQ…IEAALLHSRN (240 aa)). Gly353 contacts L-glutamine. Cys380 serves as the catalytic Nucleophile; for glutamine hydrolysis. Residues 381 to 384 (LGMQ), Glu404, and Arg461 each bind L-glutamine. Residues His506 and Glu508 contribute to the active site.

It belongs to the CTP synthase family. As to quaternary structure, homotetramer.

It carries out the reaction UTP + L-glutamine + ATP + H2O = CTP + L-glutamate + ADP + phosphate + 2 H(+). The enzyme catalyses L-glutamine + H2O = L-glutamate + NH4(+). It catalyses the reaction UTP + NH4(+) + ATP = CTP + ADP + phosphate + 2 H(+). It functions in the pathway pyrimidine metabolism; CTP biosynthesis via de novo pathway; CTP from UDP: step 2/2. Allosterically activated by GTP, when glutamine is the substrate; GTP has no effect on the reaction when ammonia is the substrate. The allosteric effector GTP functions by stabilizing the protein conformation that binds the tetrahedral intermediate(s) formed during glutamine hydrolysis. Inhibited by the product CTP, via allosteric rather than competitive inhibition. Functionally, catalyzes the ATP-dependent amination of UTP to CTP with either L-glutamine or ammonia as the source of nitrogen. Regulates intracellular CTP levels through interactions with the four ribonucleotide triphosphates. This chain is CTP synthase, found in Chlamydia abortus (strain DSM 27085 / S26/3) (Chlamydophila abortus).